We begin with the raw amino-acid sequence, 62 residues long: EAGEECDCGTPANPCCDAATCKLRPGAQCAEGLCCDQCRFGDWNDDTCTGQSADCPRNGLYG.

A Disintegrin domain is found at 1–62; it reads EAGEECDCGT…ADCPRNGLYG (62 aa). Cystine bridges form between Cys6–Cys21, Cys8–Cys16, Cys15–Cys38, Cys29–Cys35, and Cys34–Cys48. A Cell attachment site motif is present at residues 41–42; the sequence is GD.

This sequence belongs to the venom metalloproteinase (M12B) family. P-II subfamily. P-IIa sub-subfamily. Monomer. As to expression, expressed by the venom gland.

It is found in the secreted. Inhibits ADP- (IC(50)=63 nM) and collagen-induced (IC(50)=53 nM) aggregation of human platelets. In vitro, inhibits adhesion of endothelial cells to vitronectin, type-I collagen and, to a lower degree, fibronectin and laminin. This Metlapilcoatlus mexicanus (Central American jumping pitviper) protein is Disintegrin atropoimin.